Here is a 179-residue protein sequence, read N- to C-terminus: Large ribosomal subunit protein uL5 (179 aa).

This sequence belongs to the universal ribosomal protein uL5 family. As to quaternary structure, part of the 50S ribosomal subunit; part of the 5S rRNA/L5/L18/L25 subcomplex. Contacts the 5S rRNA and the P site tRNA. Forms a bridge to the 30S subunit in the 70S ribosome.

In terms of biological role, this is one of the proteins that bind and probably mediate the attachment of the 5S RNA into the large ribosomal subunit, where it forms part of the central protuberance. In the 70S ribosome it contacts protein S13 of the 30S subunit (bridge B1b), connecting the 2 subunits; this bridge is implicated in subunit movement. Contacts the P site tRNA; the 5S rRNA and some of its associated proteins might help stabilize positioning of ribosome-bound tRNAs. This Prochlorococcus marinus (strain MIT 9313) protein is Large ribosomal subunit protein uL5.